The chain runs to 102 residues: Small ribosomal subunit protein uS10 (102 aa).

The protein belongs to the universal ribosomal protein uS10 family. In terms of assembly, part of the 30S ribosomal subunit.

Functionally, involved in the binding of tRNA to the ribosomes. The protein is Small ribosomal subunit protein uS10 of Symbiobacterium thermophilum (strain DSM 24528 / JCM 14929 / IAM 14863 / T).